A 116-amino-acid chain; its full sequence is Large ribosomal subunit protein bL19 (116 aa).

This sequence belongs to the bacterial ribosomal protein bL19 family.

This protein is located at the 30S-50S ribosomal subunit interface and may play a role in the structure and function of the aminoacyl-tRNA binding site. This Roseiflexus castenholzii (strain DSM 13941 / HLO8) protein is Large ribosomal subunit protein bL19.